We begin with the raw amino-acid sequence, 381 residues long: Magnesium transporter MRS2-I (381 aa).

Helical transmembrane passes span 316–336 (LFLS…GIFG) and 353–373 (WVVL…VAYA). The short motif at 336-338 (GMN) is the Required for magnesium transport activity element.

This sequence belongs to the CorA metal ion transporter (MIT) (TC 1.A.35.5) family.

The protein resides in the membrane. Its function is as follows. Magnesium transporter that may mediate the influx of magnesium. The polypeptide is Magnesium transporter MRS2-I (MRS2-I) (Oryza sativa subsp. indica (Rice)).